The sequence spans 180 residues: MSGVVFPGQAPVDLDIYQSSYMIDYKPYGKHKYARVTSEVQAKLDTQLRDKEFYRPTPSPNPKLEDGYPAFKRPHMTAKDLGQPGFFPPQGRVGPVEDEWRFTSTCPSVYPASHALYLAHGDPNRIQQSADFPCLLEPEHQPAPDVGKGYFLLPGCACTYHCTVKVPILNRWGPLMPFYQ.

In terms of assembly, microtubule inner protein component of sperm flagellar doublet microtubules.

The protein resides in the nucleus. It localises to the cytoplasm. It is found in the cytoskeleton. The protein localises to the flagellum axoneme. Its function is as follows. Microtubule inner protein (MIP) part of the dynein-decorated doublet microtubules (DMTs) in flagella axoneme. This is Protein SPMIP9 (SPMIP9) from Bos taurus (Bovine).